Here is a 344-residue protein sequence, read N- to C-terminus: MAYSVQKSRLAKVAGVSLVLLLAACSSDSRYKRQVSGDEAYLEAAPLAELHAPAGMILPVTSGDYAIPVTNGSGAVGKALDIRPPAQPLALVSGARTQFTGDTASLLVENGRGNTLWPQVVSVLQAKNYTITQRDDAGQTLTTDWVQWNRLDEDEQYRGRYQISVKPQGYQQAVTVKLLNLEQAGKPVADAASMQRYSTEMMNVISAGLDKSATDAANAAQNRASTTMDVQSAADDTGLPMLVVRGPFNVVWQRLPAALEKVGMKVTDSTRSQGNMAVTYKPLSDSDWQELGASDPGLASGDYKLQVGDLDNRSSLQFIDPKGHTLTQSQNDALVAVFQAAFSK.

Residues 1-24 (MAYSVQKSRLAKVAGVSLVLLLAA) form the signal peptide. Residue C25 is the site of N-palmitoyl cysteine attachment. C25 carries S-diacylglycerol cysteine lipidation.

Belongs to the BamC family. In terms of assembly, part of the Bam complex, which is composed of the outer membrane protein BamA, and four lipoproteins BamB, BamC, BamD and BamE. Forms a subcomplex with BamD and BamE. The Bam complex has the shape of a hat, with the BamA beta-barrel crown in the outer membrane and the periplasmic brim formed by the BamA POTRA domains and the 4 lipoproteins.

The protein localises to the cell outer membrane. In terms of biological role, part of the outer membrane protein assembly complex (Bam), which is involved in assembly and insertion of beta-barrel proteins into the outer membrane. Nonessential member of the complex that stabilizes the interaction between the essential proteins BamA and BamD. Efficient substrate folding and insertion into the outer membrane requires all 5 subunits. A lateral gate may open between the first and last strands of the BamA beta-barrel that allows substrate to insert into the outer membrane; comparison of the structures of complete and nearly complete Bam complexes show there is considerable movement of all 5 proteins. This Escherichia coli (strain K12) protein is Outer membrane protein assembly factor BamC.